Consider the following 1650-residue polypeptide: HEAT repeat-containing protein 1 homolog (1650 aa).

Residues 1183-1210 (QYDSAASPGSSVAGGRGNRGHRIRQQSL) are disordered. The HEAT repeat unit spans residues 1609 to 1645 (LLPFLNELIEDENKQVEAQCQKVINSLQHKFGETFWS).

This sequence belongs to the HEATR1/UTP10 family.

It is found in the nucleus. The protein resides in the nucleolus. Functionally, involved in nucleolar processing of pre-18S ribosomal RNA. Involved in ribosome biosynthesis. This is HEAT repeat-containing protein 1 homolog (toe-1) from Caenorhabditis elegans.